Consider the following 914-residue polypeptide: Protein translocase subunit SecA (914 aa).

Residues Gln87, 105–109 (GEGKT), and Asp508 each bind ATP. Residues Cys898, Cys900, Cys909, and His910 each coordinate Zn(2+).

This sequence belongs to the SecA family. In terms of assembly, monomer and homodimer. Part of the essential Sec protein translocation apparatus which comprises SecA, SecYEG and auxiliary proteins SecDF-YajC and YidC. Zn(2+) serves as cofactor.

The protein localises to the cell inner membrane. It localises to the cytoplasm. It catalyses the reaction ATP + H2O + cellular proteinSide 1 = ADP + phosphate + cellular proteinSide 2.. Part of the Sec protein translocase complex. Interacts with the SecYEG preprotein conducting channel. Has a central role in coupling the hydrolysis of ATP to the transfer of proteins into and across the cell membrane, serving both as a receptor for the preprotein-SecB complex and as an ATP-driven molecular motor driving the stepwise translocation of polypeptide chains across the membrane. The sequence is that of Protein translocase subunit SecA from Xylella fastidiosa (strain 9a5c).